The chain runs to 94 residues: Acylphosphatase (94 aa).

The Acylphosphatase-like domain occupies 8–94 (HIRAWVSGKV…ETPPLGFEVC (87 aa)). Residues arginine 23 and asparagine 41 contribute to the active site.

This sequence belongs to the acylphosphatase family.

It catalyses the reaction an acyl phosphate + H2O = a carboxylate + phosphate + H(+). The sequence is that of Acylphosphatase (acyP) from Hahella chejuensis (strain KCTC 2396).